Reading from the N-terminus, the 118-residue chain is Large ribosomal subunit protein uL18 (118 aa).

This sequence belongs to the universal ribosomal protein uL18 family. In terms of assembly, part of the 50S ribosomal subunit; part of the 5S rRNA/L5/L18/L25 subcomplex. Contacts the 5S and 23S rRNAs.

In terms of biological role, this is one of the proteins that bind and probably mediate the attachment of the 5S RNA into the large ribosomal subunit, where it forms part of the central protuberance. The protein is Large ribosomal subunit protein uL18 of Ligilactobacillus salivarius (strain UCC118) (Lactobacillus salivarius).